Consider the following 505-residue polypeptide: Maturase K (505 aa).

This sequence belongs to the intron maturase 2 family. MatK subfamily.

The protein resides in the plastid. The protein localises to the chloroplast. Its function is as follows. Usually encoded in the trnK tRNA gene intron. Probably assists in splicing its own and other chloroplast group II introns. This chain is Maturase K, found in Cubanola domingensis.